A 110-amino-acid chain; its full sequence is Large ribosomal subunit protein uL22 (110 aa).

The protein belongs to the universal ribosomal protein uL22 family. As to quaternary structure, part of the 50S ribosomal subunit.

Functionally, this protein binds specifically to 23S rRNA; its binding is stimulated by other ribosomal proteins, e.g. L4, L17, and L20. It is important during the early stages of 50S assembly. It makes multiple contacts with different domains of the 23S rRNA in the assembled 50S subunit and ribosome. In terms of biological role, the globular domain of the protein is located near the polypeptide exit tunnel on the outside of the subunit, while an extended beta-hairpin is found that lines the wall of the exit tunnel in the center of the 70S ribosome. In Hydrogenovibrio crunogenus (strain DSM 25203 / XCL-2) (Thiomicrospira crunogena), this protein is Large ribosomal subunit protein uL22.